A 589-amino-acid polypeptide reads, in one-letter code: Putative adenine deaminase BC_3012 (589 aa).

It belongs to the metallo-dependent hydrolases superfamily. Adenine deaminase family.

It carries out the reaction adenine + H2O + H(+) = hypoxanthine + NH4(+). The chain is Putative adenine deaminase BC_3012 from Bacillus cereus (strain ATCC 14579 / DSM 31 / CCUG 7414 / JCM 2152 / NBRC 15305 / NCIMB 9373 / NCTC 2599 / NRRL B-3711).